A 615-amino-acid polypeptide reads, in one-letter code: MAESGGSSGGAGGGGAFGAGPGPERPNSTADKNGALKCTFSAPSHSTSLLQGLATLRAQGQLLDVVLTINREAFPAHKVVLAACSDYFRAMFTGGMREASQDVIELKGVSARGLRHIIDFAYSAEVTLDLDCVQDVLGAAVFLQMLPVVELCEEFLKAAMSVETCLNIGQMATTFSLASLRESVDAFTFRHFLQIAEEEDFLRLPLERLVFFLQSNRLQSCAEIDLFRAAVRWLQHDPARRPRASHVLCHIRFPLMQSSELVDSVQTLDIMVEDVLCRQYLLEAFNYQVLPFRQHEMQSPRTAVRSDVPSLVTFGGTPYTDSDRSVSSKVYQLPEPGARHFRELTEMEVGCSHTCVAVLDNFVYVAGGQHLQYRSGEGAVDACYRYDPHLNRWLRLQAMQESRIQFQLNVLCGMVYATGGRNRAGSLASVERYCPRRNEWGYACSLKRRTWGHAGAASGGRLYISGGYGISVEDKKALHCYDPVADQWEFKAPMSEPRVLHAMVGAGGRIYALGGRMDHVDRCFDVLAVEYYVPETDQWTSVSPMRAGQSEAGCCLLERKIYIVGGYNWRLNNVTGIVQVYNTDTDEWERDLHFPESFAGIACAPVLLPRAGTRR.

Over residues 1–21 (MAESGGSSGGAGGGGAFGAGP) the composition is skewed to gly residues. A disordered region spans residues 1 to 35 (MAESGGSSGGAGGGGAFGAGPGPERPNSTADKNGA). The residue at position 2 (Ala2) is an N-acetylalanine. Positions 63-130 (LDVVLTINRE…AYSAEVTLDL (68 aa)) constitute a BTB domain. Residues 165–266 (CLNIGQMATT…QSSELVDSVQ (102 aa)) form the BACK domain. 6 Kelch repeats span residues 310–361 (SLVT…VLDN), 362–413 (FVYV…VLCG), 414–460 (MVYA…ASGG), 461–508 (RLYI…GAGG), 510–559 (IYAL…LLER), and 561–608 (IYIV…PVLL).

May play a role in endo(sarco)plasmic reticulum (ER/SR) mitochondrial signaling. May be part of the ubiquitin-proteasome system (UPS) and affect ubiquitination and degradation of target substrates in cardiomyocytes. The polypeptide is Kelch-like protein 26 (KLHL26) (Homo sapiens (Human)).